Here is a 580-residue protein sequence, read N- to C-terminus: mRNA-decapping enzyme 1A (580 aa).

Position 62 is a phosphoserine (Ser62). The segment covering 132 to 141 (RSQQAARDKQ) has biased composition (basic and acidic residues). 3 disordered regions span residues 132–154 (RSQQ…DHRP), 172–209 (QMGD…QDKS), and 245–276 (LPGD…NMGI). A phosphoserine mark is found at Ser142, Ser179, and Ser180. Positions 173 to 196 (MGDSNISSPGLQPSTQISNLGSTE) are enriched in polar residues. Residues 253–264 (EPSSFLPFSFEP) show a composition bias toward low complexity. Residues Ser319 and Ser334 each carry the phosphoserine modification. Residues 343-359 (QAVKTTPRQRSPLSSQP) are compositionally biased toward polar residues. Residues 343-371 (QAVKTTPRQRSPLSSQPVPELSQASLAAS) are disordered. Thr348 bears the Phosphothreonine mark. Residue Ser353 is modified to Phosphoserine. Position 376 is an asymmetric dimethylarginine (Arg376). Position 401 is a phosphothreonine (Thr401). Phosphoserine is present on residues Ser422, Ser520, Ser521, and Ser523. A disordered region spans residues 510-533 (TRSSDLERKASSPSPLTVGTSENQ). The span at 520–531 (SSPSPLTVGTSE) shows a compositional bias: polar residues. Thr526 and Thr529 each carry phosphothreonine.

The protein belongs to the DCP1 family. In terms of assembly, forms a complex with EDC3, DCP2, DDX6 and EDC4/HEDLS, within this complex directly interacts with EDC3. Part of a cytoplasmic complex containing proteins involved in mRNA decay, including XRN1 and LSM1. Interacts with DCP1B. Interacts with DCP2. Interacts with DDX17 in an RNA-independent manner. Interacts with PNRC2. Interacts with SMAD4. Interacts with UPF1. Interacts with ZC3HAV1. Interacts with ZFP36L1. Interacts with NBDY. Interacts with DHX34; the interaction is RNA-independent. (Microbial infection) Cleaved by porcine reproductive and respiratory syndrome virus serine protease nsp4 after Glu-238. The cleavage inhibits DCP1A function.

Its subcellular location is the cytoplasm. It is found in the P-body. The protein localises to the nucleus. It carries out the reaction a 5'-end (N(7)-methyl 5'-triphosphoguanosine)-ribonucleoside in mRNA + H2O = N(7)-methyl-GDP + a 5'-end phospho-ribonucleoside in mRNA + 2 H(+). Its function is as follows. Necessary for the degradation of mRNAs, both in normal mRNA turnover and in nonsense-mediated mRNA decay. Removes the 7-methyl guanine cap structure from mRNA molecules, yielding a 5'-phosphorylated mRNA fragment and 7m-GDP. Contributes to the transactivation of target genes after stimulation by TGFB1. Essential for embryonic development. The polypeptide is mRNA-decapping enzyme 1A (DCP1A) (Sus scrofa (Pig)).